The following is a 281-amino-acid chain: NADPH-dependent 7-cyano-7-deazaguanine reductase (281 aa).

88–90 (IES) contacts substrate. Position 90-91 (90-91 (SK)) interacts with NADPH. Residue Cys189 is the Thioimide intermediate of the active site. Asp196 serves as the catalytic Proton donor. Position 228 to 229 (228 to 229 (HE)) interacts with substrate. 257 to 258 (RG) serves as a coordination point for NADPH.

This sequence belongs to the GTP cyclohydrolase I family. QueF type 2 subfamily. In terms of assembly, homodimer.

It localises to the cytoplasm. The enzyme catalyses 7-aminomethyl-7-carbaguanine + 2 NADP(+) = 7-cyano-7-deazaguanine + 2 NADPH + 3 H(+). The protein operates within tRNA modification; tRNA-queuosine biosynthesis. Catalyzes the NADPH-dependent reduction of 7-cyano-7-deazaguanine (preQ0) to 7-aminomethyl-7-deazaguanine (preQ1). The protein is NADPH-dependent 7-cyano-7-deazaguanine reductase of Yersinia enterocolitica serotype O:8 / biotype 1B (strain NCTC 13174 / 8081).